Consider the following 434-residue polypeptide: UDP-N-acetylmuramate--L-alanine ligase (434 aa).

110–116 (GAHGKTS) lines the ATP pocket.

The protein belongs to the MurCDEF family.

The protein resides in the cytoplasm. It catalyses the reaction UDP-N-acetyl-alpha-D-muramate + L-alanine + ATP = UDP-N-acetyl-alpha-D-muramoyl-L-alanine + ADP + phosphate + H(+). Its pathway is cell wall biogenesis; peptidoglycan biosynthesis. In terms of biological role, cell wall formation. In Limosilactobacillus reuteri (strain DSM 20016) (Lactobacillus reuteri), this protein is UDP-N-acetylmuramate--L-alanine ligase.